The primary structure comprises 514 residues: 2,3-bisphosphoglycerate-independent phosphoglycerate mutase (514 aa).

2 residues coordinate Mn(2+): Asp-14 and Ser-64. Ser-64 serves as the catalytic Phosphoserine intermediate. Substrate-binding positions include His-125, 155–156 (RD), Arg-187, Arg-193, 263–266 (RADR), and Lys-336. Asp-403, His-407, Asp-444, His-445, and His-463 together coordinate Mn(2+).

It belongs to the BPG-independent phosphoglycerate mutase family. As to quaternary structure, monomer. Requires Mn(2+) as cofactor.

It carries out the reaction (2R)-2-phosphoglycerate = (2R)-3-phosphoglycerate. Its pathway is carbohydrate degradation; glycolysis; pyruvate from D-glyceraldehyde 3-phosphate: step 3/5. Catalyzes the interconversion of 2-phosphoglycerate and 3-phosphoglycerate. This Shewanella pealeana (strain ATCC 700345 / ANG-SQ1) protein is 2,3-bisphosphoglycerate-independent phosphoglycerate mutase.